A 193-amino-acid chain; its full sequence is Interferon type A1/A2 (193 aa).

The N-terminal stretch at methionine 1–alanine 31 is a signal peptide. Disulfide bonds link cysteine 32–cysteine 129, cysteine 61–cysteine 155, and cysteine 68–cysteine 168. Asparagine 65, asparagine 71, asparagine 108, and asparagine 186 each carry an N-linked (GlcNAc...) asparagine glycan.

It belongs to the alpha/beta interferon family.

It is found in the secreted. In terms of biological role, has antiviral activities. The chain is Interferon type A1/A2 (IFNA1) from Gallus gallus (Chicken).